A 193-amino-acid chain; its full sequence is Probable GTP-binding protein EngB (193 aa).

Residues 22-193 (MYPEISFIGR…ELWQIIEDLL (172 aa)) enclose the EngB-type G domain. Residues 30 to 37 (GRSNVGKS), 57 to 61 (GKTRT), 75 to 78 (DLPG), 142 to 145 (TKMD), and 174 to 176 (FSS) each bind GTP. Residues Ser37 and Thr59 each coordinate Mg(2+).

This sequence belongs to the TRAFAC class TrmE-Era-EngA-EngB-Septin-like GTPase superfamily. EngB GTPase family. Mg(2+) serves as cofactor.

Its function is as follows. Necessary for normal cell division and for the maintenance of normal septation. In Natranaerobius thermophilus (strain ATCC BAA-1301 / DSM 18059 / JW/NM-WN-LF), this protein is Probable GTP-binding protein EngB.